Here is a 425-residue protein sequence, read N- to C-terminus: Adenylosuccinate synthetase (425 aa).

GTP is bound by residues 12-18 and 40-42; these read GDEGKGK and GHT. The active-site Proton acceptor is the aspartate 13. Residues aspartate 13 and glycine 40 each coordinate Mg(2+). IMP is bound by residues 13 to 16, 38 to 41, threonine 127, arginine 141, glutamine 222, threonine 237, and arginine 301; these read DEGK and NAGH. Catalysis depends on histidine 41, which acts as the Proton donor. Residue 297–303 participates in substrate binding; the sequence is AVTGRPR. Residues arginine 303, 329 to 331, and 411 to 413 contribute to the GTP site; these read KID and SVG.

This sequence belongs to the adenylosuccinate synthetase family. Homodimer. Mg(2+) serves as cofactor.

It is found in the cytoplasm. It carries out the reaction IMP + L-aspartate + GTP = N(6)-(1,2-dicarboxyethyl)-AMP + GDP + phosphate + 2 H(+). It functions in the pathway purine metabolism; AMP biosynthesis via de novo pathway; AMP from IMP: step 1/2. Its function is as follows. Plays an important role in the de novo pathway of purine nucleotide biosynthesis. Catalyzes the first committed step in the biosynthesis of AMP from IMP. This chain is Adenylosuccinate synthetase, found in Fusobacterium nucleatum.